A 441-amino-acid polypeptide reads, in one-letter code: N-acetyl-S-(2-succino)cysteine monooxygenase (441 aa).

FMN is bound by residues Asp-59, Thr-96, His-146, Tyr-150, Ser-220, and Ser-221.

This sequence belongs to the NtaA/SnaA/DszA monooxygenase family. Homodimer. FMN is required as a cofactor.

The enzyme catalyses N-acetyl-S-(2-succino)-L-cysteine + NADH + O2 + H(+) = N-acetyl-L-cysteine + oxaloacetate + NAD(+) + H2O. It functions in the pathway amino-acid biosynthesis; L-cysteine biosynthesis. Its function is as follows. Catalyzes the oxidative cleavage of the C-S bond of N-acetyl-S-(2-succino)cysteine, forming oxaloacetate and N-acetylcysteine (NAC). Is involved in a S-(2-succino)cysteine (2SC) degradation pathway that allows B.subtilis to grow on 2SC as a sole sulfur source, via its metabolization to cysteine. Shows almost no activity on S-succinylglutathione and 2SC. In Bacillus subtilis (strain 168), this protein is N-acetyl-S-(2-succino)cysteine monooxygenase.